We begin with the raw amino-acid sequence, 148 residues long: Nucleoside diphosphate kinase A (148 aa).

The ATP site is built by Lys9, Phe57, Arg85, Thr91, Arg102, and Asn112. Residue His115 is the Pros-phosphohistidine intermediate of the active site.

Belongs to the NDK family. It depends on Mg(2+) as a cofactor.

It carries out the reaction a 2'-deoxyribonucleoside 5'-diphosphate + ATP = a 2'-deoxyribonucleoside 5'-triphosphate + ADP. The enzyme catalyses a ribonucleoside 5'-diphosphate + ATP = a ribonucleoside 5'-triphosphate + ADP. Functionally, major role in the synthesis of nucleoside triphosphates other than ATP. The ATP gamma phosphate is transferred to the NDP beta phosphate via a ping-pong mechanism, using a phosphorylated active-site intermediate. The chain is Nucleoside diphosphate kinase A from Flaveria bidentis (Coastal plain yellowtops).